Reading from the N-terminus, the 208-residue chain is ATP phosphoribosyltransferase (208 aa).

The protein belongs to the ATP phosphoribosyltransferase family. Short subfamily. Heteromultimer composed of HisG and HisZ subunits.

Its subcellular location is the cytoplasm. It catalyses the reaction 1-(5-phospho-beta-D-ribosyl)-ATP + diphosphate = 5-phospho-alpha-D-ribose 1-diphosphate + ATP. The protein operates within amino-acid biosynthesis; L-histidine biosynthesis; L-histidine from 5-phospho-alpha-D-ribose 1-diphosphate: step 1/9. Its function is as follows. Catalyzes the condensation of ATP and 5-phosphoribose 1-diphosphate to form N'-(5'-phosphoribosyl)-ATP (PR-ATP). Has a crucial role in the pathway because the rate of histidine biosynthesis seems to be controlled primarily by regulation of HisG enzymatic activity. The protein is ATP phosphoribosyltransferase of Thermotoga petrophila (strain ATCC BAA-488 / DSM 13995 / JCM 10881 / RKU-1).